A 327-amino-acid chain; its full sequence is Ribosomal RNA small subunit methyltransferase H (327 aa).

Residues 41–43 (GGH), Asp60, Tyr87, Asp108, and Gln115 each bind S-adenosyl-L-methionine. Residues 292–327 (AERADEQETLENPRAASARLRAVERLRETTTPGSAR) are disordered.

The protein belongs to the methyltransferase superfamily. RsmH family.

Its subcellular location is the cytoplasm. It carries out the reaction cytidine(1402) in 16S rRNA + S-adenosyl-L-methionine = N(4)-methylcytidine(1402) in 16S rRNA + S-adenosyl-L-homocysteine + H(+). In terms of biological role, specifically methylates the N4 position of cytidine in position 1402 (C1402) of 16S rRNA. The sequence is that of Ribosomal RNA small subunit methyltransferase H from Kocuria rhizophila (strain ATCC 9341 / DSM 348 / NBRC 103217 / DC2201).